The primary structure comprises 595 residues: Sorting nexin-9 (595 aa).

In terms of domain architecture, SH3 spans 1 to 62 (MATKARVMYD…PTDYVEILPN (62 aa)). Residues 89–100 (QTNSSSANSNNQ) show a composition bias toward low complexity. A disordered region spans residues 89–199 (QTNSSSANSN…QRGNSRAGAS (111 aa)). Residue Ser121 is modified to Phosphoserine. The segment covering 129-144 (TDGTSAQRNSSANNWD) has biased composition (polar residues). Over residues 159–169 (GDDDEWDEDWD) the composition is skewed to acidic residues. Position 200 is a phosphoserine (Ser200). Residues 201-213 (MKLPLNKFPGFAK) form a critical for tubulation activity region. Phosphotyrosine is present on Tyr239. The PX domain occupies 250 to 360 (FDCVVADPRK…QQFLNFRDEK (111 aa)). A 1,2-diacyl-sn-glycero-3-phospho-(1D-myo-inositol-4,5-bisphosphate) contacts are provided by Arg286, Lys288, and Arg327. Residue Lys288 is modified to N6-acetyllysine. Residues 392 to 595 (LIEIEQKCDA…RQALSRFPVM (204 aa)) form the BAR domain.

Belongs to the sorting nexin family. As to quaternary structure, homodimer, and homooligomer. Heterodimer with SNX18. Interacts with ITCH. Interacts (via SH3 domain) with TNK2, WASL and ACTR3. Identified in a complex with TNK2 and clathrin heavy chains. Identified in a complex with the AP-2 complex, clathrin and DNM2. Interacts (via SH3 domain) with DNM1 and DNM2. Identified in an oligomeric complex containing DNM1 and SNX9. Interacts with FCHSD1. Interacts with ADAM9 and ADAM15 cytoplasmic tails. In terms of processing, phosphorylated on tyrosine residues by TNK2. Phosphorylation promotes its activity in the degradation of EGFR. Ubiquitinated by ITCH. In terms of tissue distribution, detected in inner ear vestibula and in the cuticular plate of cochlear hair cells (at protein level).

It is found in the cytoplasmic vesicle membrane. The protein localises to the cell membrane. The protein resides in the cytoplasmic vesicle. Its subcellular location is the clathrin-coated vesicle. It localises to the golgi apparatus. It is found in the trans-Golgi network. The protein localises to the cell projection. The protein resides in the ruffle. Its subcellular location is the cytoplasm. Functionally, involved in endocytosis and intracellular vesicle trafficking, both during interphase and at the end of mitosis. Required for efficient progress through mitosis and cytokinesis. Required for normal formation of the cleavage furrow at the end of mitosis. Plays a role in endocytosis via clathrin-coated pits, but also clathrin-independent, actin-dependent fluid-phase endocytosis. Plays a role in macropinocytosis. Promotes internalization of TNFR. Promotes degradation of EGFR after EGF signaling. Stimulates the GTPase activity of DNM1. Promotes DNM1 oligomerization. Promotes activation of the Arp2/3 complex by WASL, and thereby plays a role in the reorganization of the F-actin cytoskeleton. Binds to membranes enriched in phosphatidylinositol 4,5-bisphosphate and promotes membrane tubulation. Has lower affinity for membranes enriched in phosphatidylinositol 3-phosphate. The polypeptide is Sorting nexin-9 (Snx9) (Mus musculus (Mouse)).